The following is a 507-amino-acid chain: Arylsulfatase A (507 aa).

A signal peptide spans 1–18 (MEALWTLTLALAAGLAAA). Positions 29, 30, and 69 each coordinate Ca(2+). Cys-69 serves as the catalytic Nucleophile. Residue Cys-69 is modified to 3-oxoalanine (Cys). Lys-123 contributes to the substrate binding site. His-125 is an active-site residue. Ser-150 contacts substrate. 2 disulfide bridges follow: Cys-156/Cys-172 and Cys-161/Cys-168. Residue Asn-158 is glycosylated (N-linked (GlcNAc...) asparagine). An N-linked (GlcNAc...) asparagine glycan is attached at Asn-184. His-229 serves as a coordination point for substrate. Residues Asp-281 and Asn-282 each coordinate Ca(2+). 4 disulfides stabilise this stretch: Cys-300–Cys-414, Cys-488–Cys-500, Cys-489–Cys-502, and Cys-493–Cys-499. Lys-302 is a binding site for substrate. Asn-350 carries N-linked (GlcNAc...) asparagine glycosylation.

It belongs to the sulfatase family. Homodimer at neutral pH and homooctamer at acidic pH. Exists both as a single chain of 58 kDa (component A) or as a chain of 50 kDa (component B) linked by disulfide bond(s) to a 7 kDa chain (component C). Interacts with SUMF1. The cofactor is Ca(2+). In terms of processing, the conversion to 3-oxoalanine (also known as C-formylglycine, FGly), of a serine or cysteine residue in prokaryotes and of a cysteine residue in eukaryotes, is critical for catalytic activity. This post-translational modification is severely defective in multiple sulfatase deficiency (MSD).

Its subcellular location is the endoplasmic reticulum. It is found in the lysosome. The catalysed reaction is an N-acyl-1-beta-D-(3-O-sulfo)-galactosyl-sphing-4-enine + H2O = a beta-D-galactosyl-(1&lt;-&gt;1')-N-acylsphing-4-enine + sulfate + H(+). Its function is as follows. Hydrolyzes cerebroside sulfate. This chain is Arylsulfatase A (ARSA), found in Bos taurus (Bovine).